A 472-amino-acid polypeptide reads, in one-letter code: Lactate utilization protein B (472 aa).

2 4Fe-4S ferredoxin-type domains span residues 304-334 and 353-382; these read GTEF…GHSY and YDDY…LHEL. [4Fe-4S] cluster is bound by residues Cys313, Cys316, Cys319, Cys323, Cys366, Cys369, and Cys373.

This sequence belongs to the LutB/YkgF family.

Is involved in L-lactate degradation and allows cells to grow with lactate as the sole carbon source. Has probably a role as an electron transporter during oxidation of L-lactate. This Anoxybacillus flavithermus (strain DSM 21510 / WK1) protein is Lactate utilization protein B.